Reading from the N-terminus, the 189-residue chain is dCTP deaminase (189 aa).

Residues 112–117, 136–138, Gln157, Tyr171, and Gln181 contribute to the dCTP site; these read KSTYAR and TLE. The Proton donor/acceptor role is filled by Glu138.

It belongs to the dCTP deaminase family. Homotrimer.

The enzyme catalyses dCTP + H2O + H(+) = dUTP + NH4(+). Its pathway is pyrimidine metabolism; dUMP biosynthesis; dUMP from dCTP (dUTP route): step 1/2. Catalyzes the deamination of dCTP to dUTP. The chain is dCTP deaminase from Xanthomonas euvesicatoria pv. vesicatoria (strain 85-10) (Xanthomonas campestris pv. vesicatoria).